Here is a 310-residue protein sequence, read N- to C-terminus: Acetylglutamate kinase (310 aa).

Substrate contacts are provided by residues 83–84, Arg-105, and Asn-207; that span reads GG.

This sequence belongs to the acetylglutamate kinase family. ArgB subfamily.

The protein resides in the cytoplasm. It carries out the reaction N-acetyl-L-glutamate + ATP = N-acetyl-L-glutamyl 5-phosphate + ADP. Its pathway is amino-acid biosynthesis; L-arginine biosynthesis; N(2)-acetyl-L-ornithine from L-glutamate: step 2/4. Its function is as follows. Catalyzes the ATP-dependent phosphorylation of N-acetyl-L-glutamate. This chain is Acetylglutamate kinase, found in Ralstonia nicotianae (strain ATCC BAA-1114 / GMI1000) (Ralstonia solanacearum).